The chain runs to 445 residues: UDP-N-acetylmuramate--L-alanine ligase (445 aa).

An ATP-binding site is contributed by 108 to 114 (GSDGKTT).

This sequence belongs to the MurCDEF family.

The protein localises to the cytoplasm. The enzyme catalyses UDP-N-acetyl-alpha-D-muramate + L-alanine + ATP = UDP-N-acetyl-alpha-D-muramoyl-L-alanine + ADP + phosphate + H(+). It participates in cell wall biogenesis; peptidoglycan biosynthesis. Cell wall formation. This is UDP-N-acetylmuramate--L-alanine ligase from Pseudothermotoga lettingae (strain ATCC BAA-301 / DSM 14385 / NBRC 107922 / TMO) (Thermotoga lettingae).